Consider the following 278-residue polypeptide: Pyrroline-5-carboxylate reductase 2 (278 aa).

It belongs to the pyrroline-5-carboxylate reductase family.

It is found in the cytoplasm. It catalyses the reaction L-proline + NADP(+) = (S)-1-pyrroline-5-carboxylate + NADPH + 2 H(+). The catalysed reaction is L-proline + NAD(+) = (S)-1-pyrroline-5-carboxylate + NADH + 2 H(+). Its pathway is amino-acid biosynthesis; L-proline biosynthesis; L-proline from L-glutamate 5-semialdehyde: step 1/1. Functionally, catalyzes the reduction of 1-pyrroline-5-carboxylate (PCA) to L-proline. This chain is Pyrroline-5-carboxylate reductase 2 (proI), found in Bacillus subtilis (strain 168).